The chain runs to 753 residues: 5-methyltetrahydropteroyltriglutamate--homocysteine methyltransferase (753 aa).

Residues 17 to 20 (RELK) and Lys-117 contribute to the 5-methyltetrahydropteroyltri-L-glutamate site. L-homocysteine-binding positions include 431-433 (IGS) and Glu-484. L-methionine contacts are provided by residues 431–433 (IGS) and Glu-484. 5-methyltetrahydropteroyltri-L-glutamate contacts are provided by residues 515–516 (RC) and Trp-561. Asp-599 is an L-homocysteine binding site. Asp-599 contacts L-methionine. Residue Glu-605 coordinates 5-methyltetrahydropteroyltri-L-glutamate. 3 residues coordinate Zn(2+): His-641, Cys-643, and Glu-665. Residue His-694 is the Proton donor of the active site. Cys-726 contacts Zn(2+).

Belongs to the vitamin-B12 independent methionine synthase family. The cofactor is Zn(2+).

It catalyses the reaction 5-methyltetrahydropteroyltri-L-glutamate + L-homocysteine = tetrahydropteroyltri-L-glutamate + L-methionine. It participates in amino-acid biosynthesis; L-methionine biosynthesis via de novo pathway; L-methionine from L-homocysteine (MetE route): step 1/1. Catalyzes the transfer of a methyl group from 5-methyltetrahydrofolate to homocysteine resulting in methionine formation. The protein is 5-methyltetrahydropteroyltriglutamate--homocysteine methyltransferase of Enterobacter sp. (strain 638).